The primary structure comprises 244 residues: MNQYNFILDASAFEKGLGNVKRWCQSNGNVDGKKNVYLRFYVPTFTLQELNFLQYRHKSFSAKEALKFIDKLETATSEGQRNHVVIGRKKEEDLRSDLELFIEFPDILDAVTWPTVLSYCTEGQATIDSLNKLPKRFKILLKSCVYKCHLEDDDRIRWILVTEDPQVRKIASQCHIPWCSIVDADSIISKDMNDRSFRDSEKFNSMMLKRGVAKSENMDGKEVIKTNFDQTVYATRGSGKLWTP.

It is found in the cytoplasm. Involved in nonsense-mediated decay of mRNAs containing premature stop codons. This is Nonsense-mediated decay protein 4 (NMD4) from Candida glabrata (strain ATCC 2001 / BCRC 20586 / JCM 3761 / NBRC 0622 / NRRL Y-65 / CBS 138) (Yeast).